Here is a 143-residue protein sequence, read N- to C-terminus: Peptide methionine sulfoxide reductase MsrB (143 aa).

Residues 5-126 (KEEKIKSLNR…NSAALRFVPK (122 aa)) form the MsrB domain. C115 serves as the catalytic Nucleophile.

Belongs to the MsrB Met sulfoxide reductase family.

The catalysed reaction is L-methionyl-[protein] + [thioredoxin]-disulfide + H2O = L-methionyl-(R)-S-oxide-[protein] + [thioredoxin]-dithiol. In Bacillus subtilis (strain 168), this protein is Peptide methionine sulfoxide reductase MsrB.